The chain runs to 322 residues: DNA repair and recombination protein RadA (322 aa).

105-112 (GMFGSGKT) contributes to the ATP binding site.

This sequence belongs to the eukaryotic RecA-like protein family.

Its function is as follows. Involved in DNA repair and in homologous recombination. Binds and assemble on single-stranded DNA to form a nucleoprotein filament. Hydrolyzes ATP in a ssDNA-dependent manner and promotes DNA strand exchange between homologous DNA molecules. This chain is DNA repair and recombination protein RadA, found in Methanococcus maripaludis (strain DSM 14266 / JCM 13030 / NBRC 101832 / S2 / LL).